We begin with the raw amino-acid sequence, 306 residues long: Elongation factor Ts (306 aa).

An involved in Mg(2+) ion dislocation from EF-Tu region spans residues 80-83 (TDFV).

The protein belongs to the EF-Ts family.

The protein resides in the cytoplasm. Associates with the EF-Tu.GDP complex and induces the exchange of GDP to GTP. It remains bound to the aminoacyl-tRNA.EF-Tu.GTP complex up to the GTP hydrolysis stage on the ribosome. This is Elongation factor Ts from Methylorubrum populi (strain ATCC BAA-705 / NCIMB 13946 / BJ001) (Methylobacterium populi).